Consider the following 106-residue polypeptide: Large ribosomal subunit protein uL23 (106 aa).

It belongs to the universal ribosomal protein uL23 family. In terms of assembly, part of the 50S ribosomal subunit. Contacts protein L29, and trigger factor when it is bound to the ribosome.

One of the early assembly proteins it binds 23S rRNA. One of the proteins that surrounds the polypeptide exit tunnel on the outside of the ribosome. Forms the main docking site for trigger factor binding to the ribosome. This Acinetobacter baumannii (strain AB307-0294) protein is Large ribosomal subunit protein uL23.